The following is a 150-amino-acid chain: MAYSGKWVPKNISKYRGDPKKITYRSNWEKFFFEWLDKNPEIIAWGSETAVIPYFCNAEGKKRRYFMDIWMKDSSGQEFFIEIKPKKETQPPVKPAHLTTAAKKRFMNEIYTWSVNTDKWKAAQSLAEKRGIKFRILTEDGLRALGFKGA.

Residues Glu-29, Asp-68, and Lys-84 contribute to the active site.

Belongs to the Caudovirales head completion nuclease family.

During phage morphogenesis, plays an essential role in the head-tail joining step. The associated nuclease activity is essential for morphogenesis, possibly by cleaving packaged DNA to enable the joining of heads to tails. Displays both exo- and endonuclease activity. The sequence is that of Head completion nuclease (50) from Enterobacteria phage T4 (Bacteriophage T4).